The primary structure comprises 580 residues: Laccase-6 (580 aa).

The N-terminal stretch at 1-22 (MSCSWMIPVFAILAFVASAAQA) is a signal peptide. 2 Plastocyanin-like domains span residues 30–148 (NVAT…PRRA) and 158–317 (EEKT…YVDA). N44 and N78 each carry an N-linked (GlcNAc...) asparagine glycan. Residues H82, H84, H127, and H129 each coordinate Cu cation. N-linked (GlcNAc...) asparagine glycosylation is found at N306, N335, N385, N397, and N462. The Plastocyanin-like 3 domain maps to 424 to 564 (DFPDQPPVAF…AMVFEVESGP (141 aa)). Cu cation is bound by residues H480, H483, H485, H543, C544, H545, and H549.

Belongs to the multicopper oxidase family. Cu cation is required as a cofactor.

It localises to the secreted. Its subcellular location is the extracellular space. The protein localises to the apoplast. The enzyme catalyses 4 hydroquinone + O2 = 4 benzosemiquinone + 2 H2O. In terms of biological role, lignin degradation and detoxification of lignin-derived products. This is Laccase-6 (LAC6) from Oryza sativa subsp. japonica (Rice).